The chain runs to 342 residues: Holliday junction branch migration complex subunit RuvB (342 aa).

The large ATPase domain (RuvB-L) stretch occupies residues 1 to 185 (MREDYLKSDD…FGINARLEYY (185 aa)). Residues L24, R25, G66, K69, T70, T71, 132-134 (EDY), R175, Y185, and R222 contribute to the ATP site. T70 contacts Mg(2+). Positions 186 to 256 (DAKLLTRIVQ…IARIALQALN (71 aa)) are small ATPAse domain (RuvB-S). The head domain (RuvB-H) stretch occupies residues 259–342 (HNGLDDMDNR…PPAQSGTLFE (84 aa)). 2 residues coordinate DNA: R314 and R319.

The protein belongs to the RuvB family. As to quaternary structure, homohexamer. Forms an RuvA(8)-RuvB(12)-Holliday junction (HJ) complex. HJ DNA is sandwiched between 2 RuvA tetramers; dsDNA enters through RuvA and exits via RuvB. An RuvB hexamer assembles on each DNA strand where it exits the tetramer. Each RuvB hexamer is contacted by two RuvA subunits (via domain III) on 2 adjacent RuvB subunits; this complex drives branch migration. In the full resolvosome a probable DNA-RuvA(4)-RuvB(12)-RuvC(2) complex forms which resolves the HJ.

It localises to the cytoplasm. The enzyme catalyses ATP + H2O = ADP + phosphate + H(+). Functionally, the RuvA-RuvB-RuvC complex processes Holliday junction (HJ) DNA during genetic recombination and DNA repair, while the RuvA-RuvB complex plays an important role in the rescue of blocked DNA replication forks via replication fork reversal (RFR). RuvA specifically binds to HJ cruciform DNA, conferring on it an open structure. The RuvB hexamer acts as an ATP-dependent pump, pulling dsDNA into and through the RuvAB complex. RuvB forms 2 homohexamers on either side of HJ DNA bound by 1 or 2 RuvA tetramers; 4 subunits per hexamer contact DNA at a time. Coordinated motions by a converter formed by DNA-disengaged RuvB subunits stimulates ATP hydrolysis and nucleotide exchange. Immobilization of the converter enables RuvB to convert the ATP-contained energy into a lever motion, pulling 2 nucleotides of DNA out of the RuvA tetramer per ATP hydrolyzed, thus driving DNA branch migration. The RuvB motors rotate together with the DNA substrate, which together with the progressing nucleotide cycle form the mechanistic basis for DNA recombination by continuous HJ branch migration. Branch migration allows RuvC to scan DNA until it finds its consensus sequence, where it cleaves and resolves cruciform DNA. This Cytophaga hutchinsonii (strain ATCC 33406 / DSM 1761 / CIP 103989 / NBRC 15051 / NCIMB 9469 / D465) protein is Holliday junction branch migration complex subunit RuvB.